The sequence spans 320 residues: Pyrroline-5-carboxylate reductase (320 aa).

It belongs to the pyrroline-5-carboxylate reductase family.

It catalyses the reaction L-proline + NADP(+) = (S)-1-pyrroline-5-carboxylate + NADPH + 2 H(+). It carries out the reaction L-proline + NAD(+) = (S)-1-pyrroline-5-carboxylate + NADH + 2 H(+). Its pathway is amino-acid biosynthesis; L-proline biosynthesis; L-proline from L-glutamate 5-semialdehyde: step 1/1. The protein is Pyrroline-5-carboxylate reductase (P5CR) of Lophium arboricola (Zalerion arboricola).